Here is a 1519-residue protein sequence, read N- to C-terminus: MTHQNTETASLATTKGALEPLPPDKTAGLSTGAGHEISSDESEGSEEETGLHKDPSQRQRQQNATFQAFLSHHAETIVNSPVKPNQAQSELSISSLIGRNASGTGILNPREYQIELFERAKVQNTIAVLDTGSGKTLIAVLLLKHVIQTELIDRANGNPPRISFFLVDSVTLVYQQASVLRNNLDQNVAHFFGAMGVDLWNKQTWAEHFEKNMVIVCTAEILNQCLLNAYITMQQINLLVFDEAHHTKKDHPYARIIRDSYLRVPPSSRPRIFGMTASPVDTKGDVLEAARNLEALLDSKIATTSKLTILRQVVNRPNEEVWIYDKLQPTFTSDLYKLMESRFGDISHLEPMFRFARHATSELGTWCADRVWVSALADDVLPKVEGSIGGKRQSTGLGQLPKDVHRDITRIKEASELVESHPPNDPGAPEALSSKVRVLWKEISQCFGQETNTKCIVFTEKRYTAKVLFDLFTVLNVPGLRPGVLIGVRSSDRIGMNVTFRQQILTMVRFRTGEINCLFATAVAEEGLDIPDCNLVVRFDLYKTLIQYVQSRGRARHADSTYASMIEKDNADHESILVQVNDAEKIMQSFCQLLPEDRILHGNDDDTDAVLDREEWEEPYTLPSTAARLTHHSAITVLARYASSLQYENDTSAQVTYVVLPVNDAYVCEVILPEKSPIRGATGMPAMKKSTAKRYAAFEACRLLRKHRLLDEYLNSVYHRRLPAMRNARLAITSHRTNEYKILPKSSLWNKQIGVIPGKLYGTVISLKPLTPLAREHGSMILFTRDRLPQFPTFPIFLGEDVETIVLTVPVNMELQPSADELDYMTTFTLRIFRDVFRKTYDKEPEKLPYWLLPAISFPCNQEADPRDVVNWEILSSVHERDDIEYQADMPPEMLVDRFVYDHWDGRYRYFTLAVDENLQPSSPPPSHVARRRHMDTIMNYSISLSKNSRAKFLSRCNWNQPVLHAELVRLRRNLLDRMTDKERKLETRSVICIEPLKISAIPAAIAATCLAFPAIISRLDAYLIGLEACKKLGLEISLEYALEALTKDSDNTHEHRSQQVHMQRGMGKNYERLEFLGDCFLKMATSISLFNQHPDDNEFDYHVNRMCLICNRNLFNSAVKKELYQFIRSRGFSRDTWYPEGLTLLQGRDHSKKIGSESKHALAEKTIADVCEALIGAALLTPGPQHRFDMGVRAVSAVVDSNEHNAASWRDYISLYSIPKYQEQAPDGSEIDLCRRVEEKLGYHFRYPRLLHSAFTHPSYPSAWARVPCYQSLEFLGDALLDMVCVEDLFRRFPDRDPQWLTEHKMAMVSNKFLGALAVKLGLHTHLSYFSSALQSQITHYAEEAQAAASQSDVAVDYWTLTQDPPKVCLPDMVEAYLGAVFVDSNFRFEEVEVFFQQHIKPYFHDMAIYDTFANRHPTTFLHNKLTNEYGCLNYCLKAGEIPGADGDASTVLAAVIVHDTILTTGVASSGRYAKVKASENALTELLHIDRNEFRKRYQCDCVQENGEHGERDVGTPI.

A compositionally biased stretch (polar residues) spans 1-13 (MTHQNTETASLAT). Residues 1–62 (MTHQNTETAS…KDPSQRQRQQ (62 aa)) form a disordered region. Acidic residues predominate over residues 39–48 (SDESEGSEEE). A Helicase ATP-binding domain is found at 116-297 (LFERAKVQNT…EAARNLEALL (182 aa)). 129-136 (LDTGSGKT) serves as a coordination point for ATP. Residues 242-245 (DEAH) carry the DEAH box motif. A Helicase C-terminal domain is found at 431–601 (ALSSKVRVLW…QLLPEDRILH (171 aa)). The 91-residue stretch at 634-724 (AITVLARYAS…NSVYHRRLPA (91 aa)) folds into the Dicer dsRNA-binding fold domain. Residues 882-1001 (DDIEYQADMP…ICIEPLKISA (120 aa)) enclose the PAZ domain. RNase III domains are found at residues 1026-1184 (GLEA…LTPG) and 1235-1387 (CRRV…VDSN). Residues Glu1275, Asp1373, and Glu1376 each contribute to the Mg(2+) site. Residues 1421 to 1489 (TFLHNKLTNE…SENALTELLH (69 aa)) form the DRBM domain. 4 residues coordinate Zn(2+): Cys1433, His1460, Cys1501, and Cys1503.

The protein belongs to the helicase family. Dicer subfamily. It depends on Mg(2+) as a cofactor. The cofactor is Mn(2+).

Dicer-like endonuclease involved in cleaving double-stranded RNA in the RNA interference (RNAi) pathway. Produces 21 to 25 bp dsRNAs (siRNAs) which target the selective destruction of homologous RNAs leading to sequence-specific suppression of gene expression, called post-transcriptional gene silencing (PTGS). Part of a broad host defense response against viral infection and transposons. In Aspergillus terreus (strain NIH 2624 / FGSC A1156), this protein is Dicer-like protein 1 (dcl1).